The chain runs to 95 residues: Protein TusB (95 aa).

It belongs to the DsrH/TusB family. Heterohexamer, formed by a dimer of trimers. The hexameric TusBCD complex contains 2 copies each of TusB, TusC and TusD. The TusBCD complex interacts with TusE.

It is found in the cytoplasm. Functionally, part of a sulfur-relay system required for 2-thiolation of 5-methylaminomethyl-2-thiouridine (mnm(5)s(2)U) at tRNA wobble positions. The protein is Protein TusB of Escherichia coli (strain SMS-3-5 / SECEC).